A 158-amino-acid polypeptide reads, in one-letter code: SsrA-binding protein (158 aa).

It belongs to the SmpB family.

Its subcellular location is the cytoplasm. Functionally, required for rescue of stalled ribosomes mediated by trans-translation. Binds to transfer-messenger RNA (tmRNA), required for stable association of tmRNA with ribosomes. tmRNA and SmpB together mimic tRNA shape, replacing the anticodon stem-loop with SmpB. tmRNA is encoded by the ssrA gene; the 2 termini fold to resemble tRNA(Ala) and it encodes a 'tag peptide', a short internal open reading frame. During trans-translation Ala-aminoacylated tmRNA acts like a tRNA, entering the A-site of stalled ribosomes, displacing the stalled mRNA. The ribosome then switches to translate the ORF on the tmRNA; the nascent peptide is terminated with the 'tag peptide' encoded by the tmRNA and targeted for degradation. The ribosome is freed to recommence translation, which seems to be the essential function of trans-translation. This is SsrA-binding protein from Buchnera aphidicola subsp. Baizongia pistaciae (strain Bp).